Here is a 207-residue protein sequence, read N- to C-terminus: Casparian strip membrane protein 3 (207 aa).

Over 1 to 45 (MDSTKSTEETAINIPRESSSTKHKIAVAAVKAVATPHKRGGMKRG) the chain is Cytoplasmic. A helical membrane pass occupies residues 46–66 (VAIFDFILRICALAAALAATA). Residues 67–95 (TMGTTDQTLPFFTQFFQFQASYDDLPTFT) are Extracellular-facing. The chain crosses the membrane as a helical span at residues 96 to 116 (FFVIANAIASGYLVLSLPFSI). Residues 117–128 (VAIVRPHVTGVK) are Cytoplasmic-facing. A helical transmembrane segment spans residues 129-149 (LLLLILDTVLVAFTTAAAASA). The Extracellular segment spans residues 150–181 (AAIVYLAHNGNSNTNWFAICQQFNDFCQRTSG). A helical transmembrane segment spans residues 182 to 202 (AVVASFIAAAIFIFLVVLSAV). At 203–207 (ALRRH) the chain is on the cytoplasmic side.

Belongs to the Casparian strip membrane proteins (CASP) family. Homodimer and heterodimers.

It is found in the cell membrane. Functionally, regulates membrane-cell wall junctions and localized cell wall deposition. Required for establishment of the Casparian strip membrane domain (CSD) and the subsequent formation of Casparian strips, a cell wall modification of the root endodermis that determines an apoplastic barrier between the intraorganismal apoplasm and the extraorganismal apoplasm and prevents lateral diffusion. The polypeptide is Casparian strip membrane protein 3 (Erythranthe guttata (Yellow monkey flower)).